Consider the following 464-residue polypeptide: tRNA-2-methylthio-N(6)-dimethylallyladenosine synthase (464 aa).

Positions 19–135 constitute an MTTase N-terminal domain; sequence GSYWITTFGC…LENLLGKVDL (117 aa). The [4Fe-4S] cluster site is built by Cys-28, Cys-64, Cys-98, Cys-170, Cys-174, and Cys-177. The region spanning 156 to 394 is the Radical SAM core domain; that stretch reads RESSICGWVN…DLVEKTARSR (239 aa). One can recognise a TRAM domain in the interval 396–464; sequence KRYINNIESV…PFSLTGELYL (69 aa).

It belongs to the methylthiotransferase family. MiaB subfamily. Monomer. It depends on [4Fe-4S] cluster as a cofactor.

The protein resides in the cytoplasm. The catalysed reaction is N(6)-dimethylallyladenosine(37) in tRNA + (sulfur carrier)-SH + AH2 + 2 S-adenosyl-L-methionine = 2-methylsulfanyl-N(6)-dimethylallyladenosine(37) in tRNA + (sulfur carrier)-H + 5'-deoxyadenosine + L-methionine + A + S-adenosyl-L-homocysteine + 2 H(+). Functionally, catalyzes the methylthiolation of N6-(dimethylallyl)adenosine (i(6)A), leading to the formation of 2-methylthio-N6-(dimethylallyl)adenosine (ms(2)i(6)A) at position 37 in tRNAs that read codons beginning with uridine. This is tRNA-2-methylthio-N(6)-dimethylallyladenosine synthase from Prochlorococcus marinus (strain AS9601).